We begin with the raw amino-acid sequence, 208 residues long: Ribonuclease HII (208 aa).

The region spanning 17-208 is the RNase H type-2 domain; the sequence is LRVCGIDEAG…SFRLRQLGEK (192 aa). Positions 23, 24, and 120 each coordinate a divalent metal cation.

The protein belongs to the RNase HII family. Requires Mn(2+) as cofactor. Mg(2+) serves as cofactor.

The protein resides in the cytoplasm. The catalysed reaction is Endonucleolytic cleavage to 5'-phosphomonoester.. Functionally, endonuclease that specifically degrades the RNA of RNA-DNA hybrids. The sequence is that of Ribonuclease HII from Chlorobium luteolum (strain DSM 273 / BCRC 81028 / 2530) (Pelodictyon luteolum).